A 295-amino-acid polypeptide reads, in one-letter code: Bifunctional protein FolD (295 aa).

NADP(+)-binding positions include 166 to 168, serine 195, and isoleucine 236; that span reads GRS.

This sequence belongs to the tetrahydrofolate dehydrogenase/cyclohydrolase family. As to quaternary structure, homodimer.

The enzyme catalyses (6R)-5,10-methylene-5,6,7,8-tetrahydrofolate + NADP(+) = (6R)-5,10-methenyltetrahydrofolate + NADPH. The catalysed reaction is (6R)-5,10-methenyltetrahydrofolate + H2O = (6R)-10-formyltetrahydrofolate + H(+). The protein operates within one-carbon metabolism; tetrahydrofolate interconversion. In terms of biological role, catalyzes the oxidation of 5,10-methylenetetrahydrofolate to 5,10-methenyltetrahydrofolate and then the hydrolysis of 5,10-methenyltetrahydrofolate to 10-formyltetrahydrofolate. The protein is Bifunctional protein FolD of Prosthecochloris aestuarii (strain DSM 271 / SK 413).